A 389-amino-acid polypeptide reads, in one-letter code: Tyrosinase-like protein phomQ1 (389 aa).

Residues 53–73 (TIIVVSVITFAAIIGCWVFLS) form a helical membrane-spanning segment. Residues His141 and His150 each contribute to the Cu cation site. A glycan (N-linked (GlcNAc...) asparagine) is linked at Asn220. Cu cation is bound by residues His290 and His316.

Belongs to the tyrosinase family. Requires Cu(2+) as cofactor.

The protein localises to the membrane. The protein operates within mycotoxin biosynthesis. In terms of biological role, tyrosinase-like protein; part of the gene cluster that mediates the biosynthesis of the phomopsins, a group of hexapeptide mycotoxins which infects lupins and causes lupinosis disease in livestock. Within the pathway, phomQ1 functions as a halogenase, converting. The pathway starts with the processing of the precursor phomA by several endopeptidases including kexin proteases as well as the cluster-specific S41 family peptidase phomP1 and the oligopeptidase phomG to produce 10 identical copies of the hexapeptide Tyr-Val-Ile-Pro-Ile-Asp. After being excised from the precursor peptide, the core peptides are cyclized and modified post-translationally by enzymes encoded within the gene cluster. The timing and order of proteolysis of the phomA precursor and PTMs are still unknown. Two tyrosinase-like enzymes, phomQ1 and phomQ2, catalyze the chlorination and hydroxylation of Tyr, respectively. PhomYb, is proposed to be involved in the construction of the macrocyclic structure. The other 4 ustYa family proteins may be involved in PTMs that generate the unique structure of phomopsin A. PhomYa is required for the hydroxylation of C-beta of Tyr. PhomYc, phomYd, and phomYe are responsible for the biosynthesis of 2,3-dehydroisoleucine (dIle), 2,3-dehydroaspartic acid (dAsp), and 3,4-dehydroproline (dPro), respectively. While dIle formation by phomYc is indispensable for the installation of dAsp by phomYd, the order of the other PTMs have not been elucidated yet. Most of the biosynthetic enzymes likely have broad substrate specificity, and thus, there might be a metabolic grid from a precursor to phomopsin A. The enzyme(s) responsible for the biosynthesis of 3,4-dehydrovaline (dVal) have also not been identified yet. Finally, phomM acts as an S-adenosylmethionine-dependent alpha-N-methyltransferase that catalyzes two successive N-methylation reactions, converting N-desmethyl-phomopsin A to phomopsin A and phomopsin A further to an N,N-dimethylated congener called phomopsin E. The sequence is that of Tyrosinase-like protein phomQ1 from Diaporthe leptostromiformis (Lupinosis disease fungus).